We begin with the raw amino-acid sequence, 370 residues long: Chaperone protein DnaJ (370 aa).

The J domain occupies 6-70 (DFYEILGVSK…QKRANYDQFG (65 aa)). A CR-type zinc finger spans residues 134–216 (GANKSVTLNV…CHGKGFNTKR (83 aa)). Residues Cys-147, Cys-150, Cys-164, Cys-167, Cys-190, Cys-193, Cys-204, and Cys-207 each coordinate Zn(2+). CXXCXGXG motif repeat units lie at residues 147–154 (CTSCHGSG), 164–171 (CSRCGGTG), 190–197 (CPDCGGSG), and 204–211 (CGECHGKG).

Belongs to the DnaJ family. Homodimer. The cofactor is Zn(2+).

The protein localises to the cytoplasm. Participates actively in the response to hyperosmotic and heat shock by preventing the aggregation of stress-denatured proteins and by disaggregating proteins, also in an autonomous, DnaK-independent fashion. Unfolded proteins bind initially to DnaJ; upon interaction with the DnaJ-bound protein, DnaK hydrolyzes its bound ATP, resulting in the formation of a stable complex. GrpE releases ADP from DnaK; ATP binding to DnaK triggers the release of the substrate protein, thus completing the reaction cycle. Several rounds of ATP-dependent interactions between DnaJ, DnaK and GrpE are required for fully efficient folding. Also involved, together with DnaK and GrpE, in the DNA replication of plasmids through activation of initiation proteins. This is Chaperone protein DnaJ from Erysipelothrix rhusiopathiae.